The chain runs to 128 residues: Large ribosomal subunit protein bL20c (128 aa).

It belongs to the bacterial ribosomal protein bL20 family.

The protein resides in the plastid. Binds directly to 23S ribosomal RNA and is necessary for the in vitro assembly process of the 50S ribosomal subunit. It is not involved in the protein synthesizing functions of that subunit. This is Large ribosomal subunit protein bL20c (rpl20) from Lathraea clandestina (Purple toothwort).